The sequence spans 303 residues: Quinolinate synthase (303 aa).

Positions 25 and 42 each coordinate iminosuccinate. Cys87 provides a ligand contact to [4Fe-4S] cluster. Residues 113 to 115 and Ser130 contribute to the iminosuccinate site; that span reads YVN. Residue Cys173 participates in [4Fe-4S] cluster binding. Iminosuccinate contacts are provided by residues 199 to 201 and Thr216; that span reads HPE. Cys261 lines the [4Fe-4S] cluster pocket.

The protein belongs to the quinolinate synthase family. Type 2 subfamily. It depends on [4Fe-4S] cluster as a cofactor.

The protein resides in the cytoplasm. The catalysed reaction is iminosuccinate + dihydroxyacetone phosphate = quinolinate + phosphate + 2 H2O + H(+). It functions in the pathway cofactor biosynthesis; NAD(+) biosynthesis; quinolinate from iminoaspartate: step 1/1. In terms of biological role, catalyzes the condensation of iminoaspartate with dihydroxyacetone phosphate to form quinolinate. The polypeptide is Quinolinate synthase (Desulforudis audaxviator (strain MP104C)).